The sequence spans 388 residues: Phosphopentomutase (388 aa).

Residues Asp10, Asp282, His287, Asp323, His324, and His335 each contribute to the Mn(2+) site.

Belongs to the phosphopentomutase family. Mn(2+) serves as cofactor.

It localises to the cytoplasm. The enzyme catalyses 2-deoxy-alpha-D-ribose 1-phosphate = 2-deoxy-D-ribose 5-phosphate. It carries out the reaction alpha-D-ribose 1-phosphate = D-ribose 5-phosphate. It functions in the pathway carbohydrate degradation; 2-deoxy-D-ribose 1-phosphate degradation; D-glyceraldehyde 3-phosphate and acetaldehyde from 2-deoxy-alpha-D-ribose 1-phosphate: step 1/2. In terms of biological role, isomerase that catalyzes the conversion of deoxy-ribose 1-phosphate (dRib-1-P) and ribose 1-phosphate (Rib-1-P) to deoxy-ribose 5-phosphate (dRib-5-P) and ribose 5-phosphate (Rib-5-P), respectively. This is Phosphopentomutase from Desulfitobacterium hafniense (strain DSM 10664 / DCB-2).